A 219-amino-acid polypeptide reads, in one-letter code: Virginiamycin A acetyltransferase (219 aa).

Residue histidine 87 is part of the active site.

The protein belongs to the transferase hexapeptide repeat family.

In terms of biological role, inactivates the A compounds of virginiamycin-like antibiotics, thus providing resistance to these antibiotics. In Staphylococcus aureus, this protein is Virginiamycin A acetyltransferase (vat).